Here is a 439-residue protein sequence, read N- to C-terminus: Probable RNA-binding protein 23 (439 aa).

The disordered stretch occupies residues 13–159 (MLEAPYKKEE…PVREPVDNLS (147 aa)). Basic and acidic residues predominate over residues 17–34 (PYKKEEDEQQRKEVKKDY). A compositionally biased stretch (low complexity) spans 36 to 57 (SNTTSSTSNSGNETSGSSTIGE). The span at 60–90 (KKKRSRSHNKSRDRKRSRSRDRDRYRRRNSR) shows a compositional bias: basic residues. Residues 103–125 (RSWDRRHGSESRSRDHRREDRVH) are compositionally biased toward basic and acidic residues. Phosphoserine is present on residues Ser-128 and Ser-149. Residues 144-159 (HFREKSPVREPVDNLS) are compositionally biased toward basic and acidic residues. RRM domains are found at residues 166 to 243 (RTVF…ASQA) and 263 to 341 (MRLY…HVTE).

Belongs to the splicing factor SR family. Post-translationally, aryl sulfonamide anticancer drugs, such as indisulam (E7070) or E7820, promote ubiquitination and subsequent degradation by the DCX(DCAF15) complex. Aryl sulfonamide anticancer drugs change the substrate specificity of DCAF15 by acting as a molecular glue that promotes binding between DCAF15 and weak affinity interactor RBM23. Highly expressed in placenta, liver, skeletal muscle, heart and kidney. Expressed at lower levels in the colon, thymus, spleen, small intestine and lung.

Its subcellular location is the nucleus. Its function is as follows. RNA-binding protein that acts both as a transcription coactivator and pre-mRNA splicing factor. Regulates steroid hormone receptor-mediated transcription, independently of the pre-mRNA splicing factor activity. In Homo sapiens (Human), this protein is Probable RNA-binding protein 23.